The following is a 329-amino-acid chain: tRNA-modifying protein YgfZ (329 aa).

Positions 32 and 190 each coordinate folate.

This sequence belongs to the tRNA-modifying YgfZ family.

It localises to the cytoplasm. Its function is as follows. Folate-binding protein involved in regulating the level of ATP-DnaA and in the modification of some tRNAs. It is probably a key factor in regulatory networks that act via tRNA modification, such as initiation of chromosomal replication. This is tRNA-modifying protein YgfZ from Photobacterium profundum (strain SS9).